Consider the following 204-residue polypeptide: Probable UbiX-like flavin prenyltransferase (204 aa).

FMN contacts are provided by residues 21 to 23 (GAT), Ser-47, 98 to 101 (SMKS), and Arg-133.

It belongs to the UbiX/PAD1 family. YclB subfamily. As to quaternary structure, homododecamer.

It carries out the reaction dimethylallyl phosphate + FMNH2 = prenylated FMNH2 + phosphate. Involved in the non-oxidative decarboxylation and detoxification of phenolic derivatives under both aerobic and anaerobic conditions. Flavin prenyltransferase that catalyzes the synthesis of the prenylated FMN cofactor (prenyl-FMN) for phenolic acid decarboxylase. This chain is Probable UbiX-like flavin prenyltransferase, found in Bacillus subtilis (strain 168).